We begin with the raw amino-acid sequence, 338 residues long: Homocysteine S-methyltransferase 3 (338 aa).

One can recognise a Hcy-binding domain in the interval 12 to 326; sequence AVRRWVDAAG…NTIRAIHRTL (315 aa). 3 residues coordinate Zn(2+): Cys244, Cys311, and Cys312.

Monomer. The cofactor is Zn(2+).

The enzyme catalyses S-methyl-L-methionine + L-homocysteine = 2 L-methionine + H(+). In terms of biological role, catalyzes methyl transfer from S-methylmethionine (SMM) to adenosyl-L-homocysteine (AdoMet). SMM degradation (by HMT-1, HMT-2, HMT-3 and HMT-4) and biosynthesis (by MMT1) constitute the SMM cycle in plants, which is probably required to achieve short term control of AdoMet level. The chain is Homocysteine S-methyltransferase 3 (HMT-3) from Zea mays (Maize).